Consider the following 68-residue polypeptide: DNA-directed RNA polymerase subunit omega (68 aa).

The protein belongs to the RNA polymerase subunit omega family. In terms of assembly, the RNAP catalytic core consists of 2 alpha, 1 beta, 1 beta' and 1 omega subunit. When a sigma factor is associated with the core the holoenzyme is formed, which can initiate transcription.

It carries out the reaction RNA(n) + a ribonucleoside 5'-triphosphate = RNA(n+1) + diphosphate. Promotes RNA polymerase assembly. Latches the N- and C-terminal regions of the beta' subunit thereby facilitating its interaction with the beta and alpha subunits. The chain is DNA-directed RNA polymerase subunit omega from Desulforapulum autotrophicum (strain ATCC 43914 / DSM 3382 / VKM B-1955 / HRM2) (Desulfobacterium autotrophicum).